The primary structure comprises 250 residues: Probable transcriptional regulatory protein Cpha266_0538 (250 aa).

Belongs to the TACO1 family.

The protein localises to the cytoplasm. This Chlorobium phaeobacteroides (strain DSM 266 / SMG 266 / 2430) protein is Probable transcriptional regulatory protein Cpha266_0538.